The sequence spans 350 residues: Twinfilin-1 (350 aa).

Ser-2 is modified (N-acetylserine). One can recognise an ADF-H 1 domain in the interval 2 to 139; it reads SHQTGIQASE…SLHGYKKYLL (138 aa). Residues Ser-143 and Ser-277 each carry the phosphoserine modification. One can recognise an ADF-H 2 domain in the interval 175 to 313; it reads LQGVAFPISR…TADFLYDEVH (139 aa). At Tyr-309 the chain carries Phosphotyrosine. The segment at 317-350 is disordered; it reads HAHKQSFAKPKGPAGKRGIRRLIRGPAEAEATTD. The residue at position 349 (Thr-349) is a Phosphothreonine.

This sequence belongs to the actin-binding proteins ADF family. Twinfilin subfamily. In terms of assembly, interacts with G-actin; ADP-actin form and capping protein (CP). May also be able to interact with TWF2 and phosphoinositides, PI(4,5)P2. When bound to PI(4,5)P2, it is down-regulated. Interacts with ACTG1. Post-translationally, phosphorylated on serine and threonine residues. In terms of tissue distribution, widely expressed with highest levels in brain, liver and kidney. Also expressed in heart, lung and testis. Not detected in spleen or skeletal muscle.

The protein localises to the cytoplasm. It localises to the cytoskeleton. Its function is as follows. Actin-binding protein involved in motile and morphological processes. Inhibits actin polymerization, likely by sequestering G-actin. By capping the barbed ends of filaments, it also regulates motility. Seems to play an important role in clathrin-mediated endocytosis and distribution of endocytic organelles. The sequence is that of Twinfilin-1 (Twf1) from Mus musculus (Mouse).